The sequence spans 545 residues: CTP synthase (545 aa).

Residues 1–266 (MTTRYIFVTG…DDLVVKRFGL (266 aa)) are amidoligase domain. CTP is bound at residue serine 14. Serine 14 contacts UTP. ATP contacts are provided by residues 15-20 (SLGKGI) and aspartate 72. Residues aspartate 72 and glutamate 140 each coordinate Mg(2+). CTP-binding positions include 147–149 (DIE), 187–192 (KTKPTQ), and lysine 223. UTP is bound by residues 187 to 192 (KTKPTQ) and lysine 223. 239-241 (KDV) is an ATP binding site. In terms of domain architecture, Glutamine amidotransferase type-1 spans 291-542 (VIGMVGKYIE…IAAASAHQKR (252 aa)). L-glutamine is bound at residue glycine 352. Cysteine 379 serves as the catalytic Nucleophile; for glutamine hydrolysis. L-glutamine contacts are provided by residues 380-383 (LGMQ), glutamate 403, and arginine 470. Catalysis depends on residues histidine 515 and glutamate 517.

It belongs to the CTP synthase family. As to quaternary structure, homotetramer.

It catalyses the reaction UTP + L-glutamine + ATP + H2O = CTP + L-glutamate + ADP + phosphate + 2 H(+). It carries out the reaction L-glutamine + H2O = L-glutamate + NH4(+). The enzyme catalyses UTP + NH4(+) + ATP = CTP + ADP + phosphate + 2 H(+). It functions in the pathway pyrimidine metabolism; CTP biosynthesis via de novo pathway; CTP from UDP: step 2/2. Allosterically activated by GTP, when glutamine is the substrate; GTP has no effect on the reaction when ammonia is the substrate. The allosteric effector GTP functions by stabilizing the protein conformation that binds the tetrahedral intermediate(s) formed during glutamine hydrolysis. Inhibited by the product CTP, via allosteric rather than competitive inhibition. Functionally, catalyzes the ATP-dependent amination of UTP to CTP with either L-glutamine or ammonia as the source of nitrogen. Regulates intracellular CTP levels through interactions with the four ribonucleotide triphosphates. In Shewanella baltica (strain OS223), this protein is CTP synthase.